We begin with the raw amino-acid sequence, 163 residues long: Probable metallophosphoesterase MG207 (163 aa).

7 residues coordinate Mn(2+): aspartate 9, histidine 11, aspartate 34, asparagine 53, histidine 75, histidine 107, and histidine 109.

It belongs to the metallophosphoesterase superfamily. YfcE family. Mn(2+) serves as cofactor.

The sequence is that of Probable metallophosphoesterase MG207 from Mycoplasma genitalium (strain ATCC 33530 / DSM 19775 / NCTC 10195 / G37) (Mycoplasmoides genitalium).